The sequence spans 753 residues: Polyribonucleotide nucleotidyltransferase (753 aa).

D543 and D549 together coordinate Mg(2+). Residues 609 to 668 (PRITTVKIPVAKIGELIGPKGKNINALTEETGANISIEDDGTVFISAADGASAEAAIEKI) form the KH domain. The region spanning 680 to 749 (GERFLGTVVK…NRGKISLVPV (70 aa)) is the S1 motif domain.

The protein belongs to the polyribonucleotide nucleotidyltransferase family. It depends on Mg(2+) as a cofactor.

It is found in the cytoplasm. The catalysed reaction is RNA(n+1) + phosphate = RNA(n) + a ribonucleoside 5'-diphosphate. Its function is as follows. Involved in mRNA degradation. Catalyzes the phosphorolysis of single-stranded polyribonucleotides processively in the 3'- to 5'-direction. This is Polyribonucleotide nucleotidyltransferase from Corynebacterium glutamicum (strain ATCC 13032 / DSM 20300 / JCM 1318 / BCRC 11384 / CCUG 27702 / LMG 3730 / NBRC 12168 / NCIMB 10025 / NRRL B-2784 / 534).